The primary structure comprises 409 residues: MGLLKSHLTVCLPPSVPFLILVSTLATAKSVTNSTLNGTDVVLGSVPVIIARTDHIIVKEGNSALINCSAFGIPDLEYKWYNSVGKLLKEMDDEKERGGGKWQMLDGGLLNITKVSFSDRGKYTCVASNIYGTINNTVTLRVIFTSGDMGVYYMVVCLVAFTIVMILNITRLCMMSSHLKKTEKAINEFFRTEGAEKLQKAFEIAKRIPIITSAKTLELAKVTQFKTMEFARYIEELARSVPLPPLIMNCRTIMEEIMEVVGLEEQGQNFVRHTPEGQEAPDRDEVYTIPNSLKRSESPTADSDASSLHEQPQQIAIKVSVHPQSKKDHVDDQEGENLEVKDEEETEPSEEHSPETAEPSTDITTTELTSEEASPVEAPERELPPAHLETTEPAVTCDRNTCIIYESHV.

Residues 1 to 28 form the signal peptide; it reads MGLLKSHLTVCLPPSVPFLILVSTLATA. The Extracellular segment spans residues 29–148; that stretch reads KSVTNSTLNG…TLRVIFTSGD (120 aa). Residues N33, N37, N67, N111, and N135 are each glycosylated (N-linked (GlcNAc...) asparagine). One can recognise an Ig-like C2-type domain in the interval 47 to 141; it reads PVIIARTDHI…GTINNTVTLR (95 aa). C68 and C125 are disulfide-bonded. The chain crosses the membrane as a helical span at residues 149 to 169; that stretch reads MGVYYMVVCLVAFTIVMILNI. The Cytoplasmic portion of the chain corresponds to 170-409; the sequence is TRLCMMSSHL…NTCIIYESHV (240 aa). Y287 is subject to Phosphotyrosine. Residues S298, S303, S306, and S307 each carry the phosphoserine modification. Residues 319-392 form a disordered region; sequence VSVHPQSKKD…LPPAHLETTE (74 aa). A compositionally biased stretch (acidic residues) spans 333 to 348; the sequence is QEGENLEVKDEEETEP. Polar residues predominate over residues 362–372; it reads DITTTELTSEE.

The protein localises to the cell membrane. It is found in the nucleus. It localises to the cytoplasm. In terms of biological role, may participate in the nuclear signaling of EGFR and MAPK1/ERK2. This is Microfibrillar-associated protein 3-like (Mfap3l) from Rattus norvegicus (Rat).